Here is a 188-residue protein sequence, read N- to C-terminus: Elongation factor P-like protein (188 aa).

It belongs to the elongation factor P family.

This Marinobacter nauticus (strain ATCC 700491 / DSM 11845 / VT8) (Marinobacter aquaeolei) protein is Elongation factor P-like protein.